The primary structure comprises 865 residues: MLSPNDKKLEKLDPFYLPSLSKQKTSAEIVSEARNALRTVRTQRPFTPREDQRKLFGPASSRTPENRPPSSFSVHASSFEFSDSRPISGTRLSPLEFKPKAPASPDTVEDFCLSFPKPPVDPAKIRRISSARARLFRVASQGALLPARTLLPTQPTRVESEETVTTRDSVVKINGIYLTESKAIGHLKRHPLQLTYDGDFSKITEQEMFKGATSVPFHLRSGGDQGKRRPRASSSSRSPDQSRLDIRAGSKADLQEKNTEIEVDEVFWNTRIVPILHDLEKEENIEMVCATCTQLHHALEEGNMLGNKFKRRSVLLKTLYKLVDVGSDLLSLKLAKIILALKVSGKNLLNVCKLIFKISRSEKNDSLIRNDSILESLLEVLRSEDLQANTEAFLYCMGTIKFISGNPEFLHEMMGKGAVEILMSLIKQVNENTKKSGTCLPNSGHLLVQMTATLRNLVDSPLARSKLLSINALPQLCTVMEQHIGDKDVCTNIARIFSKLTSYHDCCVALASYSRCYALFLNLINKYQKKQDLVVRVVFILGNLTAKNNQAREQFSKEKGSIPTLLSLFHTFYKLDLHSGKRWGEGDERPEARRPAQAEDVLIKLTRVLANLAIHPGVGPAIAAHSHIVGLLLATLESKSIDDCEELVINTTATINNLSYYKVKNSIIQDRKLYIAELLLKLLVSNNMDGILEAVRVFGNLSQDHDICDFIVQKNVHKFMIALLDAKHQDICFSACGVLLNLTVDRDKRLILKEGGGIKKLVDCLRDFGPTDWQLASLVCKTLWNFSENITNAASCFGDEAANTLLALLSSFLDEELALNGSFDQDLKNYHKLHWETEFRPVAQQLLNRIKNHHTFLEPLPIPSF.

Disordered stretches follow at residues 39 to 75 (TVRT…FSVH) and 214 to 243 (SVPF…DQSR). Polar residues predominate over residues 60-75 (SSRTPENRPPSSFSVH). ARM repeat units lie at residues 261–300 (IEVD…HALE), 303–343 (NMLG…ALKV), 362–402 (EKND…TIKF), 407–448 (PEFL…HLLV), 461–502 (PLAR…KLTS), 505–546 (DCCV…NLTA), 550–587 (QARE…GEGD), 589–614 (RPEA…NLAI), 617–660 (GVGP…NLSY), 662–703 (KVKN…NLSQ), 705–744 (HDIC…NLTV), and 746–788 (RDKR…NFSE).

Its function is as follows. Required for sperm flagellum axoneme organization and function. Involved in axonemal central pair complex assembly and/or stability. The sequence is that of Armadillo repeat-containing protein 2 from Bos taurus (Bovine).